A 351-amino-acid polypeptide reads, in one-letter code: Purine permease 3 (351 aa).

10 consecutive transmembrane segments (helical) span residues 4–24 (ALVIINCIILAIGNCGGPLIM), 35–55 (IWFSTFLETAGFPVIFIPLLF), 72–92 (FFLIKPRLLIAAVIVGILSGF), 108–128 (TAALIIASQLAFIAIFSFFMV), 132–152 (FTPFTINAVVLLTVGAAVLGM), 168–188 (ITGFLITVAAAVMYAFILPLV), 207–227 (FQLILCLLASIVSVIGMFIAG), 249–269 (VAVFSAIIWQGFFLGAIGLIF), 274–294 (LVSGIMISVLLPITEVLAVIF), and 304–324 (GLSLALSLWGFVSYFYGEIKS). The EamA domain occupies 45 to 152 (GFPVIFIPLL…LTVGAAVLGM (108 aa)). The interval 329 to 351 (RRIQQEESQETEQSSLSRPISEC) is disordered.

It belongs to the purine permeases (TC 2.A.7.14) family. In terms of tissue distribution, restricted to pollen.

It is found in the membrane. In terms of biological role, may be involved in transport of purine derivatives during pollen germination and tube elongation. The polypeptide is Purine permease 3 (PUP3) (Arabidopsis thaliana (Mouse-ear cress)).